Here is a 376-residue protein sequence, read N- to C-terminus: PqqA peptide cyclase (376 aa).

One can recognise a Radical SAM core domain in the interval Val4–Asp219. Residues Cys18, Cys22, and Cys25 each contribute to the [4Fe-4S] cluster site.

It belongs to the radical SAM superfamily. PqqE family. Interacts with PqqD. The interaction is necessary for activity of PqqE. Requires [4Fe-4S] cluster as cofactor.

It catalyses the reaction [PQQ precursor protein] + S-adenosyl-L-methionine = E-Y cross-linked-[PQQ precursor protein] + 5'-deoxyadenosine + L-methionine + H(+). It functions in the pathway cofactor biosynthesis; pyrroloquinoline quinone biosynthesis. Its function is as follows. Catalyzes the cross-linking of a glutamate residue and a tyrosine residue in the PqqA protein as part of the biosynthesis of pyrroloquinoline quinone (PQQ). This chain is PqqA peptide cyclase, found in Xanthomonas campestris pv. campestris (strain 8004).